The primary structure comprises 475 residues: Coronin-2B (475 aa).

WD repeat units follow at residues 80-120, 130-172, 174-212, 215-258, and 260-303; these read GHQG…LKRN, GHSR…KMID, HTDV…VLQE, CKNH…MPVT, and EEID…PYLT. The stretch at 431-470 forms a coiled coil; sequence NELLRMFFKQQEEIRRLKEQLSQRDLLVRQLELELKNLRN.

The protein belongs to the WD repeat coronin family.

It localises to the cytoplasm. Its subcellular location is the cytoskeleton. Its function is as follows. May play a role in the reorganization of neuronal actin structure. The protein is Coronin-2B (coro2b) of Xenopus laevis (African clawed frog).